The following is a 274-amino-acid chain: Acetylaranotin bis-thiomethyltransferase (274 aa).

It belongs to the class I-like SAM-binding methyltransferase superfamily.

The protein operates within mycotoxin biosynthesis. In terms of biological role, acetylaranotin bis-thiomethyltransferase involved in the biosynthesis of acetylaranotin derivatives, members of the epipolythiodioxopiperazine (ETP) class of toxins characterized by a disulfide-bridged cyclic dipeptide. The first step of acetylaranotin biosynthesis is performed by the NRPS ataP which produces diketopiperazine cyclo-L-Phe-L-Phe via the condensation of 2 phenylalanines (L-Phe). The ataC domain of ataTC then catalyzes the formation of bishydroxylation of cyclo-L-Phe-L-Phe. The glutathione S-transferase domain ataG in ataIMG further catalyzes the conjugation of two glutathiones to the bishydroxylated intermediate. Next, the dipeptidase ataJ removes the Glu residues. The following step is performed by the carbon sulfur lyase domain ataI of ataIMG which may convert the bis-cysteinyl adduct to yield an epidithiol intermediate. The ataT domain from ataTC then catalyzes the oxidation of the free dithiols, followed by a cyclization step catalyzed by the cytochrome P450 ataF. AtaF probably acts as an epoxidase to promote a dual epoxidation formation at C8 and C9 along with C8' and C9', followed by the spontaneous nucleophilic attack of the amide nitrogens N10 and N10' to yield an intermediate with the pyrrolidine partial structure. The final steps of acetylaranotin biosynthesis involve the acetylation and ring rearrangement of an epitetrathiodiketopiperazine intermediate to produce acetylaranotin. AtaH probably catalyzes the acetylation of epitetrathiodiketopiperazine to produce a diacetate and ataY is responsible for the formation of the dihydrooxepin moiety that converts the diacetate intermediate to acetylaranotin via acetylapoaranotin. Both enzymes could function independently in the absence of the other. The acetylaranotin bis-thiomethyltransferase ataS located outside of acetylaranotin gene cluster is the main thiomethyltransferase responsible for converting acetylaranotin and its related intermediates to their methylated forms. The protein is Acetylaranotin bis-thiomethyltransferase of Aspergillus terreus (strain NIH 2624 / FGSC A1156).